The sequence spans 181 residues: c-Myc-binding protein homolog (181 aa).

Residues glutamate 111 to asparagine 127 are compositionally biased toward low complexity. Disordered stretches follow at residues glutamate 111 to isoleucine 145 and valine 159 to glutamate 181. A compositionally biased stretch (polar residues) spans proline 168–glutamate 181.

The protein belongs to the AMY1 family.

Its subcellular location is the nucleus. This Drosophila melanogaster (Fruit fly) protein is c-Myc-binding protein homolog.